A 162-amino-acid polypeptide reads, in one-letter code: uncharacterized protein (162 aa).

A coiled-coil region spans residues 129–161 (DLNAVLKNLKEVEKKSLKISKEELKKKLDQILG).

This is an uncharacterized protein from Aquifex aeolicus (strain VF5).